A 71-amino-acid chain; its full sequence is Phosphatidylinositol N-acetylglucosaminyltransferase subunit Y (71 aa).

The Cytoplasmic segment spans residues 1-3 (MFL). The chain crosses the membrane as a helical span at residues 4–26 (SLPTLTVLIPLVSLAGLFYSASV). Topologically, residues 27 to 44 (EENFPQGCTSTASLCFYS) are lumenal. Residues 45-65 (LLLPITIPVYVFFHLWTWMGI) traverse the membrane as a helical segment. Over 66–71 (KLFRHN) the chain is Cytoplasmic.

As to quaternary structure, component of the glycosylphosphatidylinositol-N-acetylglucosaminyltransferase (GPI-GnT) complex composed at least by PIGA, PIGC, PIGH, PIGP, PIGQ, PIGY and DPM2. Interacts directly with PIGA; this interaction regulates glycosylphosphatidylinositol-N-acetylglucosaminyltransferase activity. Does not interact with Ras proteins.

Its subcellular location is the endoplasmic reticulum membrane. The protein operates within glycolipid biosynthesis; glycosylphosphatidylinositol-anchor biosynthesis. Its function is as follows. Part of the glycosylphosphatidylinositol-N-acetylglucosaminyltransferase (GPI-GnT) complex that catalyzes the transfer of N-acetylglucosamine from UDP-N-acetylglucosamine to phosphatidylinositol and participates in the first step of GPI biosynthesis. May act by regulating the catalytic subunit PIGA. This chain is Phosphatidylinositol N-acetylglucosaminyltransferase subunit Y, found in Homo sapiens (Human).